Reading from the N-terminus, the 44-residue chain is Defensin heliomicin (44 aa).

Disulfide bonds link Cys-7–Cys-32, Cys-18–Cys-40, and Cys-22–Cys-42.

The protein localises to the secreted. This peptide has potent anti-fungal activity. Has no activity against Gram-negative and Gram-positive bacteria. This is Defensin heliomicin from Heliothis virescens (Tobacco budworm moth).